Reading from the N-terminus, the 304-residue chain is MDKYNLIIGSHVSLKANDFFYGSVKEALSYGANTLMVYTGAPQNTRRQPIELFKINEAHNLLKEHNIDLNNLIVHAPYIINPCSSKKYVRELAKEFLIQEIERTQFMGITKIVLHPGSCLDQDEDIALKQVYTMLNEIFATINTNVVVCLETMSGKGSEIGINLKQLKTIIDNVDSKKNIGVCLDTCHMSDSGIALDHDSFNQYLKEFDAQIGIDYIKVLHINDSKNPRGANKDRHENLGYGTIGFDNLINIIYHPLLNNIPKILETPWFDFHDQSISLYEYEIKMIRDRKWFDIKYKLLVGNK.

9 residues coordinate Zn(2+): H75, H115, E151, D185, H188, H221, D234, H236, and E266.

This sequence belongs to the AP endonuclease 2 family. The cofactor is Zn(2+).

The enzyme catalyses Endonucleolytic cleavage to 5'-phosphooligonucleotide end-products.. Endonuclease IV plays a role in DNA repair. It cleaves phosphodiester bonds at apurinic or apyrimidinic (AP) sites, generating a 3'-hydroxyl group and a 5'-terminal sugar phosphate. The polypeptide is Probable endonuclease 4 (Ureaplasma urealyticum serovar 10 (strain ATCC 33699 / Western)).